A 480-amino-acid chain; its full sequence is MKLDAPFNLDPNVKVRTRFAPSPTGYLHVGGARTALYSWLYAKHNNGEFVLRIEDTDLERSTPEATAAIIEGMEWLNLPWEHGPYYQTKRFDRYNQVIDEMIEQGLAYRCYCTKEHLEELRHTQEQNKEKPRYDRHCLHDHNHSPDEPHVVRFKNPTEGSVVFDDAVRGRIEISNSELDDLIIRRTDGSPTYNFCVVVDDWDMGITHVVRGEDHINNTPRQINILKAIGAPIPTYAHVSMINGDDGQKLSKRHGAVSVMQYRDDGYLPEALINYLVRLGWGHGDQEIFSREEMINYFELDHVSKSASAFNTEKLQWLNQHYIRELPPEYVAKHLEWHYKDQGIDTSNGPALTEIVTMLAERCKTLKEMARSSRYFFEEFETFDEAAAKKHFKGNAAEALAKVKEKLTALSSWDLHSIHEAIEQTAAELEVGMGKVGMPLRVAVTGSGQSPSMDVTLVGIGRDRVLARIQRAIDFIHAQNA.

Positions 21-31 (PSPTGYLHVGG) match the 'HIGH' region motif. Cysteine 110, cysteine 112, cysteine 137, and histidine 139 together coordinate Zn(2+). Residues 248 to 252 (KLSKR) carry the 'KMSKS' region motif. Lysine 251 is a binding site for ATP.

This sequence belongs to the class-I aminoacyl-tRNA synthetase family. Glutamate--tRNA ligase type 1 subfamily. As to quaternary structure, monomer. The cofactor is Zn(2+).

Its subcellular location is the cytoplasm. It carries out the reaction tRNA(Glu) + L-glutamate + ATP = L-glutamyl-tRNA(Glu) + AMP + diphosphate. In terms of biological role, catalyzes the attachment of glutamate to tRNA(Glu) in a two-step reaction: glutamate is first activated by ATP to form Glu-AMP and then transferred to the acceptor end of tRNA(Glu). This Haemophilus influenzae (strain ATCC 51907 / DSM 11121 / KW20 / Rd) protein is Glutamate--tRNA ligase.